The primary structure comprises 278 residues: Energy-coupling factor transporter ATP-binding protein EcfA1 (278 aa).

Residues Ile5–Asp239 form the ABC transporter domain. Residue Gly39–Ser46 coordinates ATP. Residue Glu165 is the Proton acceptor of the active site.

This sequence belongs to the ABC transporter superfamily. Energy-coupling factor EcfA family. As to quaternary structure, forms a stable energy-coupling factor (ECF) transporter complex probably composed of 2 membrane-embedded substrate-binding proteins (S component), 2 ATP-binding proteins (A component) and 2 transmembrane proteins (T component). This complex interacts with a number of substrate-specific components, including FolT and ThiT for 5-formyltetrahydrofolate and thiamine respectively.

Its subcellular location is the cell membrane. Functionally, ATP-binding (A) component of a common energy-coupling factor (ECF) ABC-transporter complex. Unlike classic ABC transporters this ECF transporter provides the energy necessary to transport a number of different substrates including 5-formyltetrahydrofolate and thiamine. Expression of the complex plus FolT or ThiT in Lactococcus lactis subsp. cremoris (strain NZ9000) allows 5-formyltetrahydrofolate or thiamine uptake respectively; 5-formyltetrahydrofolate or thiamine are not taken up in the absence of FolT/ThiT or the EcfA1A2T complex. Deenergized L.lactis subsp. cremoris (treated with 2-deoxyglucose) does not take up substrate. The protein is Energy-coupling factor transporter ATP-binding protein EcfA1 of Lacticaseibacillus paracasei (strain ATCC 334 / BCRC 17002 / CCUG 31169 / CIP 107868 / KCTC 3260 / NRRL B-441) (Lactobacillus paracasei).